The following is a 708-amino-acid chain: Lactotransferrin (708 aa).

A signal peptide spans 1 to 19; that stretch reads MKLFFPALLSLGALGLCLA. Transferrin-like domains follow at residues 25 to 352 and 364 to 693; these read VRWC…GLRE and VVWC…KLRR. 2 disulfide bridges follow: Cys-28-Cys-64 and Cys-38-Cys-55. The interval 44–51 is interaction with E.coli ompC; the sequence is RMKKVRGP. Asp-79 lines the Fe(3+) pocket. Lys-92 is an active-site residue. Tyr-111 serves as a coordination point for Fe(3+). 5 disulfide bridges follow: Cys-134/Cys-217, Cys-176/Cys-192, Cys-179/Cys-202, Cys-189/Cys-200, and Cys-250/Cys-264. Thr-136, Arg-140, Ala-142, and Gly-143 together coordinate hydrogencarbonate. Position 211 (Tyr-211) interacts with Fe(3+). Asn-252 is a glycosylation site (N-linked (GlcNAc...) asparagine). His-272 serves as a coordination point for Fe(3+). Residue Ser-278 is the Nucleophile of the active site. Intrachain disulfides connect Cys-367–Cys-399 and Cys-377–Cys-390. Asn-385 carries N-linked (GlcNAc...) asparagine glycosylation. Residues Asp-414 and Tyr-452 each coordinate Fe(3+). Cystine bridges form between Cys-424–Cys-703, Cys-444–Cys-666, Cys-476–Cys-551, Cys-500–Cys-694, Cys-510–Cys-524, Cys-521–Cys-534, Cys-592–Cys-606, and Cys-644–Cys-649. The hydrogencarbonate site is built by Thr-478, Arg-482, Ala-484, and Gly-485. Residue Asn-537 is glycosylated (N-linked (GlcNAc...) asparagine). A Fe(3+)-binding site is contributed by Tyr-545. The N-linked (GlcNAc...) asparagine glycan is linked to Asn-594. Residue His-614 participates in Fe(3+) binding.

It belongs to the transferrin family. Monomer. Found in a complex with LTF, CLU, EPPIN and SEMG1. Interacts with E.coli outer membrane protein C (OmpC). Found in a complex with MPO and LTF; interacts directly with CP, allows Fe(3+) incorporation into LTF and activation of CP ferroxidase activity. In terms of processing, poly-N-acetyllactosaminic carbohydrate moiety seems to be needed for TLR4 activation.

Its subcellular location is the secreted. The protein localises to the cytoplasmic granule. In terms of biological role, transferrins are iron binding transport proteins which can bind two Fe(3+) ions in association with the binding of an anion, usually bicarbonate. Major iron-binding and multifunctional protein found in exocrine fluids such as breast milk and mucosal secretions. Has antimicrobial activity, which depends on the extracellular cation concentration. Antimicrobial properties include bacteriostasis, which is related to its ability to sequester free iron and thus inhibit microbial growth, as well as direct bactericidal properties leading to the release of lipopolysaccharides from the bacterial outer membrane. Can also prevent bacterial biofilm development in P.aeruginosa infection. Has weak antifungal activity against C.albicans. Has anabolic, differentiating and anti-apoptotic effects on osteoblasts and can also inhibit osteoclastogenesis, possibly playing a role in the regulation of bone growth. Promotes binding of species C adenoviruses to epithelial cells, promoting adenovirus infection. Can inhibit papillomavirus infections. Stimulates the TLR4 signaling pathway leading to NF-kappa-B activation and subsequent pro-inflammatory cytokine production while also interfering with the lipopolysaccharide (LPS)-stimulated TLR4 signaling. Inhibits neutrophil granulocyte migration to sites of apoptosis, when secreted by apoptotic cells. Stimulates VEGFA-mediated endothelial cell migration and proliferation. Binds heparin, chondroitin sulfate and possibly other glycosaminoglycans (GAGs). Also binds specifically to pneumococcal surface protein A (PspA), the lipid A portion of bacterial lipopolysaccharide (LPS), lysozyme and DNA. Functionally, lactoferricin binds to the bacterial surface and is crucial for the bactericidal functions. Has some antiviral activity against papillomavirus infection. N-terminal region shows strong antifungal activity against C.albicans. Contains two BBXB heparin-binding consensus sequences that appear to form the predominate functional GAG-binding site. Its function is as follows. The lactotransferrin transferrin-like domain 1 functions as a serine protease of the peptidase S60 family that cuts arginine rich regions. This function contributes to the antimicrobial activity. Shows a preferential cleavage at -Arg-Ser-Arg-Arg-|- and -Arg-Arg-Ser-Arg-|-, and of Z-Phe-Arg-|-aminomethylcoumarin sites. This is Lactotransferrin (LTF) from Camelus dromedarius (Dromedary).